Here is a 130-residue protein sequence, read N- to C-terminus: Small ribosomal subunit protein uS11 (130 aa).

Belongs to the universal ribosomal protein uS11 family. As to quaternary structure, part of the 30S ribosomal subunit. Interacts with proteins S7 and S18. Binds to IF-3.

Located on the platform of the 30S subunit, it bridges several disparate RNA helices of the 16S rRNA. Forms part of the Shine-Dalgarno cleft in the 70S ribosome. The chain is Small ribosomal subunit protein uS11 from Microcystis aeruginosa (strain NIES-843 / IAM M-2473).